The primary structure comprises 506 residues: Cobyric acid synthase (506 aa).

A GATase cobBQ-type domain is found at 260–453 (KVGVAAIYFP…FHGIFNEPAV (194 aa)). Cys341 serves as the catalytic Nucleophile. His445 is an active-site residue.

This sequence belongs to the CobB/CobQ family. CobQ subfamily.

The protein operates within cofactor biosynthesis; adenosylcobalamin biosynthesis. Its function is as follows. Catalyzes amidations at positions B, D, E, and G on adenosylcobyrinic A,C-diamide. NH(2) groups are provided by glutamine, and one molecule of ATP is hydrogenolyzed for each amidation. In Chlorobium chlorochromatii (strain CaD3), this protein is Cobyric acid synthase.